The following is a 103-amino-acid chain: Small ribosomal subunit protein uS10 (103 aa).

It belongs to the universal ribosomal protein uS10 family. In terms of assembly, part of the 30S ribosomal subunit.

Involved in the binding of tRNA to the ribosomes. This Neisseria meningitidis serogroup C / serotype 2a (strain ATCC 700532 / DSM 15464 / FAM18) protein is Small ribosomal subunit protein uS10.